Reading from the N-terminus, the 221-residue chain is Redox-sensing transcriptional repressor Rex (221 aa).

The segment at residues isoleucine 17–phenylalanine 56 is a DNA-binding region (H-T-H motif). Glycine 91 to glycine 96 contacts NAD(+).

The protein belongs to the transcriptional regulatory Rex family. Homodimer.

The protein resides in the cytoplasm. Functionally, modulates transcription in response to changes in cellular NADH/NAD(+) redox state. The sequence is that of Redox-sensing transcriptional repressor Rex from Oenococcus oeni (strain ATCC BAA-331 / PSU-1).